The chain runs to 113 residues: Cytochrome c (113 aa).

Position 1 is an N-acetylalanine (alanine 1). Residues cysteine 22, cysteine 25, and histidine 26 each coordinate heme c. N6,N6,N6-trimethyllysine is present on lysine 80. Methionine 88 contributes to the heme c binding site. An N6,N6,N6-trimethyllysine modification is found at lysine 94.

This sequence belongs to the cytochrome c family. Binds 1 heme c group covalently per subunit.

It localises to the mitochondrion intermembrane space. Functionally, electron carrier protein. The oxidized form of the cytochrome c heme group can accept an electron from the heme group of the cytochrome c1 subunit of cytochrome reductase. Cytochrome c then transfers this electron to the cytochrome oxidase complex, the final protein carrier in the mitochondrial electron-transport chain. This Ginkgo biloba (Ginkgo) protein is Cytochrome c.